Here is a 349-residue protein sequence, read N- to C-terminus: Ferredoxin--NADP reductase 1 (349 aa).

FAD-binding residues include Glu-36, Lys-44, Tyr-48, Val-88, Leu-123, Asp-290, and Ser-331.

It belongs to the ferredoxin--NADP reductase type 2 family. Homodimer. FAD serves as cofactor.

It catalyses the reaction 2 reduced [2Fe-2S]-[ferredoxin] + NADP(+) + H(+) = 2 oxidized [2Fe-2S]-[ferredoxin] + NADPH. This Lysinibacillus sphaericus (strain C3-41) protein is Ferredoxin--NADP reductase 1.